The following is a 570-amino-acid chain: Spastin (570 aa).

Residues 1-35 (MNSGHKARLRGGRACGPVSDGSARGNRLLFYTRSL) lie on the Cytoplasmic side of the membrane. Positions 36-52 (SRVPEWLLRVLLLLLRW) form an intramembrane region, helical. Topologically, residues 53-570 (LFQPIRRAMA…NREYGDTTGV (518 aa)) are cytoplasmic. The region spanning 83-158 (YHKQAFEFIS…SMAEDRLKLL (76 aa)) is the MIT domain. The segment at 186–269 (APASGAVSKK…SPQRKRDMKN (84 aa)) is disordered. Composition is skewed to polar residues over residues 199-208 (LTITNQTSLR), 216-242 (TPNA…NQKG), and 251-261 (VKASTTATASP). 335-342 (GPPGNGKT) contacts ATP.

The protein belongs to the AAA ATPase family. Spastin subfamily. Homohexamer. The homohexamer is stabilized by ATP-binding. The homohexamer may adopt a ring conformation through which microtubules pass prior to being severed. Interacts with microtubules.

Its subcellular location is the membrane. It is found in the cytoplasm. It localises to the cytoskeleton. The protein resides in the microtubule organizing center. The protein localises to the centrosome. Its subcellular location is the perinuclear region. It is found in the nucleus. It catalyses the reaction n ATP + n H2O + a microtubule = n ADP + n phosphate + (n+1) alpha/beta tubulin heterodimers.. ATP-dependent microtubule severing protein that specifically recognizes and cuts microtubules that are polyglutamylated. Preferentially recognizes and acts on microtubules decorated with short polyglutamate tails: severing activity increases as the number of glutamates per tubulin rises from one to eight, but decreases beyond this glutamylation threshold. Microtubule severing promotes reorganization of cellular microtubule arrays and the release of microtubules from the centrosome following nucleation. Required for membrane traffic from the endoplasmic reticulum (ER) to the Golgi and for completion of the abscission stage of cytokinesis. Also plays a role in axon growth and the formation of axonal branches. This chain is Spastin, found in Danio rerio (Zebrafish).